The following is a 264-amino-acid chain: Apolipoprotein A-I (264 aa).

The first 18 residues, 1-18 (MKAVLLVVAALFLAGSQA), serve as a signal peptide directing secretion. A run of 2 repeats spans residues 67-88 (LRLSDNWDTLSTILTKLQADFG) and 89-110 (LATQEFWDTLEKETEWLKQIVS). Residues 67 to 264 (LRLSDNWDTL…DQASKQLAAQ (198 aa)) form a 10 X approximate tandem repeats region. One copy of the 3; half-length repeat lies at 111-121 (EDLQDVKHKVQ). 3 repeat units span residues 122-143 (PYLENFQKKVQEEVERYREKVR), 144-165 (PLGIELRDGARQKLQELQEKLT), and 166-187 (PLGEDLRDRTREHVDVLRTQLA). A 7; truncated repeat occupies 188–207 (PFSEEMRQRLAKRLEELKDS). Met193 bears the Methionine sulfoxide mark. Repeat unit 8 spans residues 208 to 229 (ATLADYHAKASEHLKMLGEKAK). Residues 230 to 240 (PALEDLRQGLL) form a 9; half-length repeat. Residues 241–264 (PVLENLKASILSSIDQASKQLAAQ) form repeat 10.

This sequence belongs to the apolipoprotein A1/A4/E family. In terms of assembly, homodimer. Interacts with APOA1BP and CLU. Component of a sperm activating protein complex (SPAP), consisting of APOA1, an immunoglobulin heavy chain, an immunoglobulin light chain and albumin. Interacts with NDRG1. Interacts with SCGB3A2. Interacts with NAXE and YJEFN3. In terms of processing, glycosylated. Post-translationally, palmitoylated. Phosphorylation sites are present in the extracellular medium.

It is found in the secreted. In terms of biological role, participates in the reverse transport of cholesterol from tissues to the liver for excretion by promoting cholesterol efflux from tissues and by acting as a cofactor for the lecithin cholesterol acyltransferase (LCAT). As part of the SPAP complex, activates spermatozoa motility. This chain is Apolipoprotein A-I (APOA1), found in Cavia aperea (Brazilian guinea pig).